Reading from the N-terminus, the 173-residue chain is Crossover junction endodeoxyribonuclease RuvC (173 aa).

Active-site residues include D8, E67, and D139. D8, E67, and D139 together coordinate Mg(2+).

This sequence belongs to the RuvC family. Homodimer which binds Holliday junction (HJ) DNA. The HJ becomes 2-fold symmetrical on binding to RuvC with unstacked arms; it has a different conformation from HJ DNA in complex with RuvA. In the full resolvosome a probable DNA-RuvA(4)-RuvB(12)-RuvC(2) complex forms which resolves the HJ. Mg(2+) is required as a cofactor.

It localises to the cytoplasm. The enzyme catalyses Endonucleolytic cleavage at a junction such as a reciprocal single-stranded crossover between two homologous DNA duplexes (Holliday junction).. Its function is as follows. The RuvA-RuvB-RuvC complex processes Holliday junction (HJ) DNA during genetic recombination and DNA repair. Endonuclease that resolves HJ intermediates. Cleaves cruciform DNA by making single-stranded nicks across the HJ at symmetrical positions within the homologous arms, yielding a 5'-phosphate and a 3'-hydroxyl group; requires a central core of homology in the junction. The consensus cleavage sequence is 5'-(A/T)TT(C/G)-3'. Cleavage occurs on the 3'-side of the TT dinucleotide at the point of strand exchange. HJ branch migration catalyzed by RuvA-RuvB allows RuvC to scan DNA until it finds its consensus sequence, where it cleaves and resolves the cruciform DNA. The protein is Crossover junction endodeoxyribonuclease RuvC of Shewanella piezotolerans (strain WP3 / JCM 13877).